The following is a 352-amino-acid chain: Protein-glutamate methylesterase/protein-glutamine glutaminase 2 (352 aa).

One can recognise a Response regulatory domain in the interval 1 to 116 (MIVDDSAIVR…KDFIQDAASD (116 aa)). D50 carries the post-translational modification 4-aspartylphosphate. The region spanning 159–351 (SKTTEHVVAI…QEIMRYAHLK (193 aa)) is the CheB-type methylesterase domain. Active-site residues include S171, H197, and D293.

It belongs to the CheB family. In terms of processing, phosphorylated by CheA. Phosphorylation of the N-terminal regulatory domain activates the methylesterase activity.

The protein localises to the cytoplasm. The enzyme catalyses [protein]-L-glutamate 5-O-methyl ester + H2O = L-glutamyl-[protein] + methanol + H(+). It catalyses the reaction L-glutaminyl-[protein] + H2O = L-glutamyl-[protein] + NH4(+). Functionally, involved in chemotaxis. Part of a chemotaxis signal transduction system that modulates chemotaxis in response to various stimuli. Catalyzes the demethylation of specific methylglutamate residues introduced into the chemoreceptors (methyl-accepting chemotaxis proteins or MCP) by CheR. Also mediates the irreversible deamidation of specific glutamine residues to glutamic acid. The sequence is that of Protein-glutamate methylesterase/protein-glutamine glutaminase 2 from Shewanella denitrificans (strain OS217 / ATCC BAA-1090 / DSM 15013).